Consider the following 345-residue polypeptide: Alpha-2-HS-glycoprotein (345 aa).

An N-terminal signal peptide occupies residues 1–18 (MKSLVLLLCFAQLWGCQS). The Cystatin fetuin-A-type 1 domain maps to 19-133 (APQGTGLGFR…QFRVMHTQCH (115 aa)). Cystine bridges form between C32–C336, C89–C100, C114–C132, C146–C149, C208–C219, and C230–C247. N-linked (GlcNAc...) asparagine glycosylation occurs at N99. At S134 the chain carries Phosphoserine. The residue at position 135 (T135) is a Phosphothreonine. S138 is subject to Phosphoserine. The Cystatin fetuin-A-type 2 domain maps to 144–250 (KLCPRCPLLT…EEVSVACKLF (107 aa)). N-linked (GlcNAc...) asparagine glycans are attached at residues N156 and N176. Residues S305, S309, S312, and S314 each carry the phosphoserine modification. Positions 312–334 (SASGETLHSPKVGQPGAAGPVSP) are disordered.

Belongs to the fetuin family. Post-translationally, phosphorylated by FAM20C in the extracellular medium. As to expression, liver is the major site of synthesis, but fetuin is also expressed in limb buds and other extrahepatic tissues during development.

The protein resides in the secreted. Its function is as follows. Probably involved in differentiation. Functionally, (Microbial infection) Facilitates invasion of hepatocytes by Plasmodium berghei sporozoites. This is Alpha-2-HS-glycoprotein (Ahsg) from Mus musculus (Mouse).